We begin with the raw amino-acid sequence, 110 residues long: Thiosulfate sulfurtransferase GlpE (110 aa).

Residues 17–105 (RENGAQVVDI…WRSVYPADTS (89 aa)) form the Rhodanese domain. Cysteine 65 serves as the catalytic Cysteine persulfide intermediate.

It belongs to the GlpE family.

It is found in the cytoplasm. The catalysed reaction is thiosulfate + hydrogen cyanide = thiocyanate + sulfite + 2 H(+). It catalyses the reaction thiosulfate + [thioredoxin]-dithiol = [thioredoxin]-disulfide + hydrogen sulfide + sulfite + 2 H(+). Transferase that catalyzes the transfer of sulfur from thiosulfate to thiophilic acceptors such as cyanide or dithiols. May function in a CysM-independent thiosulfate assimilation pathway by catalyzing the conversion of thiosulfate to sulfite, which can then be used for L-cysteine biosynthesis. The sequence is that of Thiosulfate sulfurtransferase GlpE from Pseudomonas paraeruginosa (strain DSM 24068 / PA7) (Pseudomonas aeruginosa (strain PA7)).